The primary structure comprises 183 residues: Translation initiation factor IF-3 (183 aa).

Belongs to the IF-3 family. In terms of assembly, monomer.

It localises to the cytoplasm. Its function is as follows. IF-3 binds to the 30S ribosomal subunit and shifts the equilibrium between 70S ribosomes and their 50S and 30S subunits in favor of the free subunits, thus enhancing the availability of 30S subunits on which protein synthesis initiation begins. The protein is Translation initiation factor IF-3 of Aliivibrio salmonicida (strain LFI1238) (Vibrio salmonicida (strain LFI1238)).